The chain runs to 469 residues: UDP-N-acetylmuramate--L-alanine ligase (469 aa).

Glycine 113 to threonine 119 is a binding site for ATP.

Belongs to the MurCDEF family.

The protein resides in the cytoplasm. It catalyses the reaction UDP-N-acetyl-alpha-D-muramate + L-alanine + ATP = UDP-N-acetyl-alpha-D-muramoyl-L-alanine + ADP + phosphate + H(+). Its pathway is cell wall biogenesis; peptidoglycan biosynthesis. Functionally, cell wall formation. The chain is UDP-N-acetylmuramate--L-alanine ligase from Neisseria gonorrhoeae (strain ATCC 700825 / FA 1090).